The following is a 206-amino-acid chain: Pyridoxine/pyridoxamine 5'-phosphate oxidase (206 aa).

Residues 55 to 60, 70 to 71, Arg76, Lys77, and Gln99 each bind FMN; these read RVVLLK and YT. Residue Lys60 coordinates substrate. Substrate is bound by residues Tyr117, Arg121, and Ser125. Residues 134-135 and Trp179 each bind FMN; that span reads QS. Residue 185–187 participates in substrate binding; that stretch reads RLH. Arg189 provides a ligand contact to FMN.

Belongs to the pyridoxamine 5'-phosphate oxidase family. Homodimer. FMN is required as a cofactor.

It carries out the reaction pyridoxamine 5'-phosphate + O2 + H2O = pyridoxal 5'-phosphate + H2O2 + NH4(+). The enzyme catalyses pyridoxine 5'-phosphate + O2 = pyridoxal 5'-phosphate + H2O2. It functions in the pathway cofactor metabolism; pyridoxal 5'-phosphate salvage; pyridoxal 5'-phosphate from pyridoxamine 5'-phosphate: step 1/1. Its pathway is cofactor metabolism; pyridoxal 5'-phosphate salvage; pyridoxal 5'-phosphate from pyridoxine 5'-phosphate: step 1/1. In terms of biological role, catalyzes the oxidation of either pyridoxine 5'-phosphate (PNP) or pyridoxamine 5'-phosphate (PMP) into pyridoxal 5'-phosphate (PLP). The polypeptide is Pyridoxine/pyridoxamine 5'-phosphate oxidase (Myxococcus xanthus (strain DK1622)).